The sequence spans 266 residues: MTHPNTATPPFIAVVPARLASTRLPNKPLADIGGKPMVVRVAERARESGAQQVLVASDAQAVLDAARDHGFEAVLTRADHPSGTDRLAEVAAQFGWSDDTIVVNVQGDEPLIDPALVCGVASHLAASHGCAIATAAHPITDPAEIFNPNVVKVVLDARGVALYFSRAPIPWARDAYQPHWPNVASMPAPHAPAVVHRHIGLYAYRAQFLRTYPSLAISPIEQVEALEQLRAMWHGERIAVLVTHEVPLPGVDTPADLARVQALFGS.

The protein belongs to the KdsB family.

The protein resides in the cytoplasm. It carries out the reaction 3-deoxy-alpha-D-manno-oct-2-ulosonate + CTP = CMP-3-deoxy-beta-D-manno-octulosonate + diphosphate. It functions in the pathway nucleotide-sugar biosynthesis; CMP-3-deoxy-D-manno-octulosonate biosynthesis; CMP-3-deoxy-D-manno-octulosonate from 3-deoxy-D-manno-octulosonate and CTP: step 1/1. It participates in bacterial outer membrane biogenesis; lipopolysaccharide biosynthesis. Activates KDO (a required 8-carbon sugar) for incorporation into bacterial lipopolysaccharide in Gram-negative bacteria. This Paraburkholderia phytofirmans (strain DSM 17436 / LMG 22146 / PsJN) (Burkholderia phytofirmans) protein is 3-deoxy-manno-octulosonate cytidylyltransferase 1.